The chain runs to 186 residues: Peptidyl-tRNA hydrolase (186 aa).

Tyr14 provides a ligand contact to tRNA. His19 functions as the Proton acceptor in the catalytic mechanism. Phe65, Asn67, and Asn113 together coordinate tRNA.

This sequence belongs to the PTH family. In terms of assembly, monomer.

Its subcellular location is the cytoplasm. It carries out the reaction an N-acyl-L-alpha-aminoacyl-tRNA + H2O = an N-acyl-L-amino acid + a tRNA + H(+). Hydrolyzes ribosome-free peptidyl-tRNAs (with 1 or more amino acids incorporated), which drop off the ribosome during protein synthesis, or as a result of ribosome stalling. Its function is as follows. Catalyzes the release of premature peptidyl moieties from peptidyl-tRNA molecules trapped in stalled 50S ribosomal subunits, and thus maintains levels of free tRNAs and 50S ribosomes. The sequence is that of Peptidyl-tRNA hydrolase from Limosilactobacillus fermentum (strain NBRC 3956 / LMG 18251) (Lactobacillus fermentum).